A 309-amino-acid polypeptide reads, in one-letter code: Probable manganese-dependent inorganic pyrophosphatase (309 aa).

Mn(2+)-binding residues include histidine 9, aspartate 13, aspartate 15, aspartate 75, histidine 97, and aspartate 149.

This sequence belongs to the PPase class C family. The cofactor is Mn(2+).

The protein resides in the cytoplasm. The catalysed reaction is diphosphate + H2O = 2 phosphate + H(+). The protein is Probable manganese-dependent inorganic pyrophosphatase of Bacillus cereus (strain AH187).